We begin with the raw amino-acid sequence, 404 residues long: uncharacterized protein (404 aa).

The next 2 membrane-spanning stretches (helical) occupy residues 35–55 (ILFS…FTFL) and 92–112 (EDIW…ISSI).

It localises to the membrane. This is an uncharacterized protein from Saccharomyces cerevisiae (strain ATCC 204508 / S288c) (Baker's yeast).